The following is an 89-amino-acid chain: Small ribosomal subunit protein uS15 (89 aa).

The protein belongs to the universal ribosomal protein uS15 family. In terms of assembly, part of the 30S ribosomal subunit. Forms a bridge to the 50S subunit in the 70S ribosome, contacting the 23S rRNA.

Functionally, one of the primary rRNA binding proteins, it binds directly to 16S rRNA where it helps nucleate assembly of the platform of the 30S subunit by binding and bridging several RNA helices of the 16S rRNA. Forms an intersubunit bridge (bridge B4) with the 23S rRNA of the 50S subunit in the ribosome. The chain is Small ribosomal subunit protein uS15 from Serratia proteamaculans (strain 568).